We begin with the raw amino-acid sequence, 215 residues long: Cytochrome b6 (215 aa).

A helical membrane pass occupies residues 32-52 (IFYCLGGITFTSFVIQVASGF). Cys-35 serves as a coordination point for heme c. 2 residues coordinate heme b: His-86 and His-100. A run of 3 helical transmembrane segments spans residues 90–110 (ASMMVLMMILHIFRVYLTGGF), 116–136 (LTWVTGVILSVLTVSFGVTGY), and 186–206 (LHTFVLPLLTAVFMLMHFLMI). 2 residues coordinate heme b: His-187 and His-202.

This sequence belongs to the cytochrome b family. PetB subfamily. In terms of assembly, the 4 large subunits of the cytochrome b6-f complex are cytochrome b6, subunit IV (17 kDa polypeptide, PetD), cytochrome f and the Rieske protein, while the 4 small subunits are PetG, PetL, PetM and PetN. The complex functions as a dimer. It depends on heme b as a cofactor. Heme c is required as a cofactor.

The protein resides in the plastid. It is found in the chloroplast thylakoid membrane. In terms of biological role, component of the cytochrome b6-f complex, which mediates electron transfer between photosystem II (PSII) and photosystem I (PSI), cyclic electron flow around PSI, and state transitions. This Chaetosphaeridium globosum (Charophycean green alga) protein is Cytochrome b6.